The chain runs to 690 residues: Highly divergent homeobox (690 aa).

The homeobox 1 DNA-binding region spans 3-63 (LRSVFTVEQQ…NKRRKMSSKN (61 aa)). Disordered regions lie at residues 55–76 (KRRK…TSLS) and 112–132 (SPAS…QITE). The span at 64–76 (SESGTATTGTSLS) shows a compositional bias: low complexity. Over residues 113-123 (PASSSSRQGTN) the composition is skewed to polar residues. Residues lysine 135, lysine 140, lysine 144, lysine 163, lysine 172, lysine 194, lysine 212, lysine 221, and lysine 232 each participate in a glycyl lysine isopeptide (Lys-Gly) (interchain with G-Cter in SUMO2) cross-link. A DNA-binding region (homeobox 2) is located at residues 435 to 498 (ALQDRTQFSD…NRRRKYRLMG (64 aa)). The tract at residues 501–539 (VPPPRGGPADFSEQPESGSLSALTPGEEAGPEVGEDNDR) is disordered. Lysine 613 is covalently cross-linked (Glycyl lysine isopeptide (Lys-Gly) (interchain with G-Cter in SUMO2)). The disordered stretch occupies residues 664–690 (FNHASLEPDDTSFSVSSLSEKNVSESL). Positions 674-690 (TSFSVSSLSEKNVSESL) are enriched in polar residues.

The protein localises to the nucleus. This Homo sapiens (Human) protein is Highly divergent homeobox (HDX).